The following is a 154-amino-acid chain: Prefoldin subunit 2 (154 aa).

Over residues 124-139 (IRLMGEDEKPAAKENS) the composition is skewed to basic and acidic residues. The segment at 124–154 (IRLMGEDEKPAAKENSEGAGAKASSAGVLVS) is disordered. Low complexity predominate over residues 140–154 (EGAGAKASSAGVLVS).

It belongs to the prefoldin subunit beta family. Heterohexamer of two PFD-alpha type and four PFD-beta type subunits. Component of the PAQosome complex which is responsible for the biogenesis of several protein complexes and which consists of R2TP complex members RUVBL1, RUVBL2, RPAP3 and PIH1D1, URI complex members PFDN2, PFDN6, PDRG1, UXT and URI1 as well as ASDURF, POLR2E and DNAAF10/WDR92. Interacts with URI1; the interaction is phosphorylation-dependent and occurs in a growth-dependent manner.

It is found in the nucleus. It localises to the cytoplasm. The protein localises to the mitochondrion. Its function is as follows. Binds specifically to cytosolic chaperonin (c-CPN) and transfers target proteins to it. Binds to nascent polypeptide chain and promotes folding in an environment in which there are many competing pathways for nonnative proteins. The sequence is that of Prefoldin subunit 2 (PFDN2) from Homo sapiens (Human).